The chain runs to 286 residues: uncharacterized protein (286 aa).

Disordered regions lie at residues 1 to 38 (MSQK…EDDV), 108 to 146 (HTGE…RRHK), 196 to 227 (RTQK…KTRL), and 241 to 286 (DVDD…PRSS). A compositionally biased stretch (low complexity) spans 18–29 (SSSKQVLSSTSS). Residues 243–268 (DDQKKDGSGEEKKEKKSAEKEKKISH) show a composition bias toward basic and acidic residues. Polar residues predominate over residues 269 to 278 (ENVQSLSPSS).

This is an uncharacterized protein from Caenorhabditis elegans.